We begin with the raw amino-acid sequence, 158 residues long: MLCPFCSFPESRVLDSRPADEGNSIRRRRECGECGKRFTTYERVDERPLVVVKKDGRREVFDRAKLLAGFMKACEKRPVPVQRIEDTVHSIERELRSHGELEVLSQAVGELVMNSLLELDEVAYIRFASVYRQFGDIYSFLHEVEKLLKSKEDKKGAL.

Residues 3 to 34 (CPFCSFPESRVLDSRPADEGNSIRRRRECGEC) fold into a zinc finger. One can recognise an ATP-cone domain in the interval 49–139 (LVVVKKDGRR…VYRQFGDIYS (91 aa)).

This sequence belongs to the NrdR family. Zn(2+) is required as a cofactor.

Functionally, negatively regulates transcription of bacterial ribonucleotide reductase nrd genes and operons by binding to NrdR-boxes. The sequence is that of Transcriptional repressor NrdR from Desulforamulus reducens (strain ATCC BAA-1160 / DSM 100696 / MI-1) (Desulfotomaculum reducens).